A 154-amino-acid polypeptide reads, in one-letter code: uncharacterized protein (154 aa).

The first 21 residues, 1–21 (MSISSGSFAQPAAVVSSPGVT), serve as a signal peptide directing secretion.

Belongs to the ivy family.

It localises to the periplasm. This is an uncharacterized protein from Yersinia pestis.